The primary structure comprises 509 residues: Membrane-bound lytic murein transglycosylase F (509 aa).

A signal peptide spans 1 to 40; the sequence is MLASACTHSWRTGRFLNRIIKSSVQTLTAAALIANLSACS. The segment at 41–280 is non-LT domain; that stretch reads RPTTLEKIEQ…YLQERYFGHV (240 aa). Residues 281–509 are LT domain; sequence NQLNYVGART…APFRVTPPML (229 aa). E327 is an active-site residue. Residues 474–500 form a disordered region; it reads DGSVAQNEDAPTTGADGTTEETPAIPA.

In the N-terminal section; belongs to the bacterial solute-binding protein 3 family. It in the C-terminal section; belongs to the transglycosylase Slt family.

The protein localises to the cell outer membrane. It catalyses the reaction Exolytic cleavage of the (1-&gt;4)-beta-glycosidic linkage between N-acetylmuramic acid (MurNAc) and N-acetylglucosamine (GlcNAc) residues in peptidoglycan, from either the reducing or the non-reducing ends of the peptidoglycan chains, with concomitant formation of a 1,6-anhydrobond in the MurNAc residue.. Functionally, murein-degrading enzyme that degrades murein glycan strands and insoluble, high-molecular weight murein sacculi, with the concomitant formation of a 1,6-anhydromuramoyl product. Lytic transglycosylases (LTs) play an integral role in the metabolism of the peptidoglycan (PG) sacculus. Their lytic action creates space within the PG sacculus to allow for its expansion as well as for the insertion of various structures such as secretion systems and flagella. In Hahella chejuensis (strain KCTC 2396), this protein is Membrane-bound lytic murein transglycosylase F.